Reading from the N-terminus, the 257-residue chain is Discoidin-2 (257 aa).

Positions 1-155 are beta-sandwich; the sequence is MSVPAGSVSC…SLRWELYALP (155 aa). One can recognise an F5/8 type C domain in the interval 10-154; the sequence is CLANALLNLR…ISLRWELYAL (145 aa). 3 residues coordinate Ca(2+): N39, S40, and D47. The short motif at 81–83 is the Cell attachment site element; sequence RGD. The residue at position 84 (H84) is a Phosphohistidine. A linker region spans residues 156-162; sequence VKSYSNP. The segment at 163–257 is lectin-like; that stretch reads SVQVGEVSIG…FDYVAVEFNN (95 aa). Residues D209, R218, and W238 each coordinate a carbohydrate.

As to quaternary structure, homotrimer. In terms of processing, the N-terminus is blocked. As to expression, maturing spore cells.

Galactose-binding lectin. May be necessary for the primary process of spore formation and may be involved in spore coat formation. This chain is Discoidin-2 (dscE), found in Dictyostelium discoideum (Social amoeba).